A 151-amino-acid polypeptide reads, in one-letter code: MATSGTYVTEVPLKGSADKHYKRWRDENHLFPDAIGHHIQGVTVHDGEWDSHEAIKIWNYTCDGKPEVFKERKEIDDENMVITFRGLEGHVMEQLKVYDLIYQFSQKSPDDIVCKITMIWEKRTDDSPEPSNYMKFLKSVVADMDEHVLKA.

Belongs to the MLP family.

The polypeptide is MLP-like protein 329 (MLP329) (Arabidopsis thaliana (Mouse-ear cress)).